The following is a 352-amino-acid chain: tRNA pseudouridine synthase D (352 aa).

Aspartate 81 acts as the Nucleophile in catalysis. The TRUD domain maps to 157–303 (GIPNYFGVQR…MEHERRILRL (147 aa)).

The protein belongs to the pseudouridine synthase TruD family.

It catalyses the reaction uridine(13) in tRNA = pseudouridine(13) in tRNA. Functionally, responsible for synthesis of pseudouridine from uracil-13 in transfer RNAs. The sequence is that of tRNA pseudouridine synthase D from Pseudomonas syringae pv. tomato (strain ATCC BAA-871 / DC3000).